Reading from the N-terminus, the 141-residue chain is Acetyltransferase YpeA (141 aa).

One can recognise an N-acetyltransferase domain in the interval 1-141 (MEIRVFRQED…GKRLIEDEEY (141 aa)).

Belongs to the acetyltransferase family. YpeA subfamily.

In Salmonella choleraesuis (strain SC-B67), this protein is Acetyltransferase YpeA.